The chain runs to 233 residues: Phosphoribosylformylglycinamidine synthase subunit PurQ (233 aa).

A Glutamine amidotransferase type-1 domain is found at 9 to 233 (RIGIVTFPGS…LSGFLSAFSS (225 aa)). The active-site Nucleophile is the Cys-92. Residues His-201 and Glu-203 contribute to the active site.

Part of the FGAM synthase complex composed of 1 PurL, 1 PurQ and 2 PurS subunits.

Its subcellular location is the cytoplasm. It carries out the reaction N(2)-formyl-N(1)-(5-phospho-beta-D-ribosyl)glycinamide + L-glutamine + ATP + H2O = 2-formamido-N(1)-(5-O-phospho-beta-D-ribosyl)acetamidine + L-glutamate + ADP + phosphate + H(+). The catalysed reaction is L-glutamine + H2O = L-glutamate + NH4(+). It participates in purine metabolism; IMP biosynthesis via de novo pathway; 5-amino-1-(5-phospho-D-ribosyl)imidazole from N(2)-formyl-N(1)-(5-phospho-D-ribosyl)glycinamide: step 1/2. Functionally, part of the phosphoribosylformylglycinamidine synthase complex involved in the purines biosynthetic pathway. Catalyzes the ATP-dependent conversion of formylglycinamide ribonucleotide (FGAR) and glutamine to yield formylglycinamidine ribonucleotide (FGAM) and glutamate. The FGAM synthase complex is composed of three subunits. PurQ produces an ammonia molecule by converting glutamine to glutamate. PurL transfers the ammonia molecule to FGAR to form FGAM in an ATP-dependent manner. PurS interacts with PurQ and PurL and is thought to assist in the transfer of the ammonia molecule from PurQ to PurL. The polypeptide is Phosphoribosylformylglycinamidine synthase subunit PurQ (Frankia casuarinae (strain DSM 45818 / CECT 9043 / HFP020203 / CcI3)).